The chain runs to 20 residues: Thylakoid lumenal 20 kDa protein (20 aa).

The interval 1–20 is disordered; that stretch reads RDVDVGSFLPKSPSDPSMVL.

The protein resides in the plastid. Its subcellular location is the chloroplast thylakoid lumen. This chain is Thylakoid lumenal 20 kDa protein, found in Spinacia oleracea (Spinach).